The following is a 281-amino-acid chain: Undecaprenyl-diphosphatase (281 aa).

A run of 8 helical transmembrane segments spans residues 5–25 (LFVL…FLPI), 48–68 (VKMY…LLYW), 92–112 (FWFM…LLDA), 118–138 (LMTP…MIYA), 154–174 (VTPK…IPGM), 192–212 (VVAA…YSLL), 226–246 (AELI…VAVI), and 261–281 (FAIY…MGFF).

The protein belongs to the UppP family.

It is found in the cell membrane. The catalysed reaction is di-trans,octa-cis-undecaprenyl diphosphate + H2O = di-trans,octa-cis-undecaprenyl phosphate + phosphate + H(+). Its function is as follows. Catalyzes the dephosphorylation of undecaprenyl diphosphate (UPP). Confers resistance to bacitracin. The polypeptide is Undecaprenyl-diphosphatase (Ruminiclostridium cellulolyticum (strain ATCC 35319 / DSM 5812 / JCM 6584 / H10) (Clostridium cellulolyticum)).